We begin with the raw amino-acid sequence, 301 residues long: Oxaloacetate tautomerase YisK (301 aa).

Lysine 99 contributes to the oxalate binding site. Residues glutamate 148, glutamate 150, and aspartate 179 each coordinate Mn(2+). Oxalate-binding residues include lysine 196 and threonine 266.

It belongs to the FAH family. Homodimer. It depends on Mg(2+) as a cofactor. The cofactor is Mn(2+).

Its subcellular location is the cytoplasm. It catalyses the reaction oxaloacetate = enol-oxaloacetate. It carries out the reaction oxaloacetate + H(+) = pyruvate + CO2. Functionally, tautomerase that converts enol-oxaloacetate to the keto form of oxaloacetate. Also shows weak oxaloacetate decarboxylase (ODx), catalyzing the decarboxylation of oxaloacetate (OAA) to pyruvate and CO(2). The chain is Oxaloacetate tautomerase YisK from Bacillus subtilis (strain 168).